The chain runs to 256 residues: Geranylgeranylglyceryl phosphate synthase (256 aa).

2 residues coordinate Mg(2+): aspartate 28 and serine 53. Sn-glycerol 1-phosphate-binding positions include 172–178 (YLEAGSG), 203–204 (GG), and 225–226 (GT).

It belongs to the GGGP/HepGP synthase family. Group II subfamily. The cofactor is Mg(2+).

Its subcellular location is the cytoplasm. The enzyme catalyses sn-glycerol 1-phosphate + (2E,6E,10E)-geranylgeranyl diphosphate = sn-3-O-(geranylgeranyl)glycerol 1-phosphate + diphosphate. It functions in the pathway membrane lipid metabolism; glycerophospholipid metabolism. Functionally, prenyltransferase that catalyzes the transfer of the geranylgeranyl moiety of geranylgeranyl diphosphate (GGPP) to the C3 hydroxyl of sn-glycerol-1-phosphate (G1P). This reaction is the first ether-bond-formation step in the biosynthesis of archaeal membrane lipids. The polypeptide is Geranylgeranylglyceryl phosphate synthase (Methanococcus maripaludis (strain C7 / ATCC BAA-1331)).